Consider the following 1013-residue polypeptide: Endosome/lysosome-associated apoptosis and autophagy regulator 1 (1013 aa).

A signal peptide spans 1-41; sequence MAEPGHSHHLSARVRGRTERRIPRLWRLLLWAGTAFQVTQG. The Extracellular portion of the chain corresponds to 42 to 910; sequence TGPELHACKE…ICKTIDFWLK (869 aa). N153 carries N-linked (GlcNAc...) asparagine glycosylation. Disulfide bonds link C278–C295, C308–C330, and C311–C342. N404 and N672 each carry an N-linked (GlcNAc...) asparagine glycan. The MRH domain maps to 656–858; that stretch reads NDCTFSRNTP…LWESAAACPL (203 aa). Cystine bridges form between C658-C704, C714-C739, C808-C844, and C820-C856. A helical membrane pass occupies residues 911–931; sequence VGISAGTCTAILLTVLTCYFW. The Cytoplasmic segment spans residues 932-1013; the sequence is KKNQKLEYKY…TSSGGLDMDL (82 aa).

It belongs to the ELAPOR family. Interacts with HSPA5; may regulate the function of HSPA5 in apoptosis and cell proliferation. In terms of tissue distribution, expressed in normal endometrium but overexpressed in endometroid tumors.

It localises to the cell membrane. Its subcellular location is the late endosome membrane. The protein resides in the golgi apparatus. It is found in the trans-Golgi network membrane. The protein localises to the lysosome membrane. It localises to the endoplasmic reticulum membrane. Functionally, may protect cells from cell death by inducing cytosolic vacuolization and up-regulating the autophagy pathway. May play a role in apoptosis and cell proliferation through its interaction with HSPA5. In Homo sapiens (Human), this protein is Endosome/lysosome-associated apoptosis and autophagy regulator 1.